The chain runs to 149 residues: 3-dehydroquinate dehydratase 2 (149 aa).

The active-site Proton acceptor is the tyrosine 24. Asparagine 75, histidine 81, and aspartate 88 together coordinate substrate. Histidine 101 functions as the Proton donor in the catalytic mechanism. Substrate-binding positions include 102–103 (LS) and arginine 112.

Belongs to the type-II 3-dehydroquinase family. In terms of assembly, homododecamer.

The enzyme catalyses 3-dehydroquinate = 3-dehydroshikimate + H2O. The protein operates within metabolic intermediate biosynthesis; chorismate biosynthesis; chorismate from D-erythrose 4-phosphate and phosphoenolpyruvate: step 3/7. Its function is as follows. Catalyzes a trans-dehydration via an enolate intermediate. This Pseudomonas putida (strain ATCC 47054 / DSM 6125 / CFBP 8728 / NCIMB 11950 / KT2440) protein is 3-dehydroquinate dehydratase 2 (aroQ2).